Here is a 411-residue protein sequence, read N- to C-terminus: Putative competence-damage inducible protein (411 aa).

It belongs to the CinA family.

This chain is Putative competence-damage inducible protein, found in Desulforamulus reducens (strain ATCC BAA-1160 / DSM 100696 / MI-1) (Desulfotomaculum reducens).